Reading from the N-terminus, the 296-residue chain is Methylsterol monooxygenase 1 (296 aa).

A run of 2 helical transmembrane segments spans residues L55–I75 and T100–T120. Residues C145–T274 enclose the Fatty acid hydroxylase domain. Positions H157 to H161 match the Histidine box-1 motif. Positions H170–H174 match the Histidine box-2 motif. The chain crosses the membrane as a helical span at residues F199–C219. The Histidine box-3 signature appears at F249–M255.

It belongs to the sterol desaturase family. Fe cation serves as cofactor.

It localises to the endoplasmic reticulum membrane. The catalysed reaction is 4,4-dimethyl-5alpha-cholest-7-en-3beta-ol + 6 Fe(II)-[cytochrome b5] + 3 O2 + 5 H(+) = 4alpha-carboxy-4beta-methyl-5alpha-cholest-7-ene-3beta-ol + 6 Fe(III)-[cytochrome b5] + 4 H2O. It participates in steroid biosynthesis; zymosterol biosynthesis; zymosterol from lanosterol: step 3/6. In terms of biological role, catalyzes the first step in the removal of the two C-4 methyl groups of 4,4-dimethylzymosterol. The sequence is that of Methylsterol monooxygenase 1 (MSMO1) from Gallus gallus (Chicken).